The chain runs to 980 residues: Valine--tRNA ligase (980 aa).

A 'HIGH' region motif is present at residues 43–53 (PNVTGTLHMGH). Positions 586-590 (KMSKS) match the 'KMSKS' region motif. Lys-589 lines the ATP pocket. The stretch at 914–980 (LVDMDAERMR…AGLREQRGKL (67 aa)) forms a coiled coil.

It belongs to the class-I aminoacyl-tRNA synthetase family. ValS type 1 subfamily. In terms of assembly, monomer.

The protein localises to the cytoplasm. It carries out the reaction tRNA(Val) + L-valine + ATP = L-valyl-tRNA(Val) + AMP + diphosphate. Its function is as follows. Catalyzes the attachment of valine to tRNA(Val). As ValRS can inadvertently accommodate and process structurally similar amino acids such as threonine, to avoid such errors, it has a 'posttransfer' editing activity that hydrolyzes mischarged Thr-tRNA(Val) in a tRNA-dependent manner. The protein is Valine--tRNA ligase of Xanthomonas oryzae pv. oryzae (strain PXO99A).